A 1011-amino-acid polypeptide reads, in one-letter code: Histone deacetylase 9 (1011 aa).

Residue Ser-22 is modified to Phosphoserine. Positions Pro-23 to Arg-27 are interaction with CTBP1. 3 disordered regions span residues Arg-110 to Ala-139, Thr-183 to Asn-249, and Thr-262 to Val-304. The segment at Arg-136–Lys-154 is interaction with MEF2. Residues Leu-175–Ala-343 form an interaction with MAPK10 region. Residues Leu-185–Tyr-199 are compositionally biased toward polar residues. Residues Asp-208–Ala-219 show a composition bias toward basic and acidic residues. Residues Thr-218–Val-261 are interaction with ETV6. Phosphoserine is present on residues Ser-220 and Ser-240. A compositionally biased stretch (basic and acidic residues) spans Lys-233–Gly-248. Low complexity predominate over residues Thr-262–Ser-285. Position 451 is a phosphoserine (Ser-451). The tract at residues Gln-494 to Asp-536 is disordered. Residues Ser-522 to Ser-532 show a composition bias toward polar residues. At Ser-554 the chain carries Phosphoserine. The histone deacetylase stretch occupies residues Ser-631–Glu-978. The Zn(2+) site is built by Cys-646, Cys-648, His-654, and Cys-731. The active site involves His-783.

It belongs to the histone deacetylase family. HD type 2 subfamily. Homodimer. Interacts with CTBP1. The phosphorylated form interacts with 14-3-3. Interacts with HDAC1 and HDAC3, and probably with HDAC4 and HDAC5. Interacts with MEF2, MAPK10, ETV6, NCOR1 and BCL6. Interacts with FOXP3 in the absence of T-cell stimulation. Post-translationally, phosphorylated on Ser-220 and Ser-450; which promotes 14-3-3-binding, impairs interaction with MEF2, and antagonizes antimyogenic activity. Phosphorylated on Ser-240; which impairs nuclear accumulation. Isoform 7 is phosphorylated on Tyr-1010. Phosphorylated by the PKC kinases PKN1 and PKN2, impairing nuclear import. Sumoylated. As to expression, broadly expressed, with highest levels in brain, heart, muscle and testis. Isoform 3 is present in human bladder carcinoma cells (at protein level).

The protein resides in the nucleus. The enzyme catalyses N(6)-acetyl-L-lysyl-[histone] + H2O = L-lysyl-[histone] + acetate. Its activity is regulated as follows. Inhibited by Trichostatin A (TSA) and suberoylanilide hydroxamic acid. Responsible for the deacetylation of lysine residues on the N-terminal part of the core histones (H2A, H2B, H3 and H4). Histone deacetylation gives a tag for epigenetic repression and plays an important role in transcriptional regulation, cell cycle progression and developmental events. Represses MEF2-dependent transcription. Its function is as follows. Isoform 3 lacks active site residues and therefore is catalytically inactive. Represses MEF2-dependent transcription by recruiting HDAC1 and/or HDAC3. Seems to inhibit skeletal myogenesis and to be involved in heart development. Protects neurons from apoptosis, both by inhibiting JUN phosphorylation by MAPK10 and by repressing JUN transcription via HDAC1 recruitment to JUN promoter. The chain is Histone deacetylase 9 (HDAC9) from Homo sapiens (Human).